The chain runs to 924 residues: Isoleucine--tRNA ligase (924 aa).

A 'HIGH' region motif is present at residues 57–67 (PYANGDIHMGH). Residue E552 participates in L-isoleucyl-5'-AMP binding. The 'KMSKS' region motif lies at 593–597 (KMSKS). K596 contacts ATP. 4 residues coordinate Zn(2+): C891, C894, C911, and C914.

Belongs to the class-I aminoacyl-tRNA synthetase family. IleS type 1 subfamily. Monomer. It depends on Zn(2+) as a cofactor.

It is found in the cytoplasm. It catalyses the reaction tRNA(Ile) + L-isoleucine + ATP = L-isoleucyl-tRNA(Ile) + AMP + diphosphate. Catalyzes the attachment of isoleucine to tRNA(Ile). As IleRS can inadvertently accommodate and process structurally similar amino acids such as valine, to avoid such errors it has two additional distinct tRNA(Ile)-dependent editing activities. One activity is designated as 'pretransfer' editing and involves the hydrolysis of activated Val-AMP. The other activity is designated 'posttransfer' editing and involves deacylation of mischarged Val-tRNA(Ile). This chain is Isoleucine--tRNA ligase, found in Geobacillus thermodenitrificans (strain NG80-2).